A 305-amino-acid chain; its full sequence is Deoxyribonuclease gamma (305 aa).

The N-terminal stretch at 1 to 20 is a signal peptide; sequence MSRELAPLLLLLLSIHSALA. The Bipartite nuclear localization signal signature appears at 35–51; that stretch reads KQEDKNAMDVIVKVIKR. Active-site residues include Glu100 and His155. A disulfide bridge connects residues Cys194 and Cys231. A not required for free DNA-nuclease activity but required for activity towards liposome-coated DNA region spans residues 284 to 305; it reads SRAFTNSKKSVTLRKKTKSKRS. A Nuclear localization signal motif is present at residues 296-304; sequence LRKKTKSKR.

It belongs to the DNase I family. Requires Ca(2+) as cofactor. The cofactor is Mg(2+). In terms of processing, poly-ADP-ribosylated by PARP1. ADP-ribosylation negatively regulates enzymatic activity during apoptosis. In terms of tissue distribution, liver and spleen.

Its subcellular location is the nucleus. The protein resides in the endoplasmic reticulum. The protein localises to the secreted. With respect to regulation, inhibited by zinc. Functionally, has DNA hydrolytic activity. Is capable of both single- and double-stranded DNA cleavage, producing DNA fragments with 3'-OH ends. Can cleave chromatin to nucleosomal units and cleaves nucleosomal and liposome-coated DNA. Acts in internucleosomal DNA fragmentation (INDF) during apoptosis and necrosis. The role in apoptosis includes myogenic and neuronal differentiation, and BCR-mediated clonal deletion of self-reactive B cells. Is active on chromatin in apoptotic cell-derived membrane-coated microparticles and thus suppresses anti-DNA autoimmunity. Together with DNASE1, plays a key role in degrading neutrophil extracellular traps (NETs). NETs are mainly composed of DNA fibers and are released by neutrophils to bind pathogens during inflammation. Degradation of intravascular NETs by DNASE1 and DNASE1L3 is required to prevent formation of clots that obstruct blood vessels and cause organ damage following inflammation. The sequence is that of Deoxyribonuclease gamma from Homo sapiens (Human).